A 479-amino-acid chain; its full sequence is Sulfate adenylyltransferase subunit 1 (479 aa).

The tr-type G domain maps to 25–239; that stretch reads KSLLRFLTCG…EVLETVDIQR (215 aa). The interval 34–41 is G1; that stretch reads GSVDDGKS. 34-41 contributes to the GTP binding site; sequence GSVDDGKS. The interval 92–96 is G2; it reads GITID. A G3 region spans residues 113 to 116; the sequence is DTPG. GTP-binding positions include 113–117 and 168–171; these read DTPGH and NKMD. Residues 168 to 171 form a G4 region; sequence NKMD. The interval 206–208 is G5; sequence SAL.

This sequence belongs to the TRAFAC class translation factor GTPase superfamily. Classic translation factor GTPase family. CysN/NodQ subfamily. As to quaternary structure, heterodimer composed of CysD, the smaller subunit, and CysN.

The catalysed reaction is sulfate + ATP + H(+) = adenosine 5'-phosphosulfate + diphosphate. The protein operates within sulfur metabolism; hydrogen sulfide biosynthesis; sulfite from sulfate: step 1/3. Functionally, with CysD forms the ATP sulfurylase (ATPS) that catalyzes the adenylation of sulfate producing adenosine 5'-phosphosulfate (APS) and diphosphate, the first enzymatic step in sulfur assimilation pathway. APS synthesis involves the formation of a high-energy phosphoric-sulfuric acid anhydride bond driven by GTP hydrolysis by CysN coupled to ATP hydrolysis by CysD. The sequence is that of Sulfate adenylyltransferase subunit 1 from Salmonella gallinarum (strain 287/91 / NCTC 13346).